Consider the following 153-residue polypeptide: MAPKAEKKPAAKKPAEEEPAAEKAEKAPAGKKPKAEKRLPAGKGEKGSGEGKKAGRKKGKKSVETYKIYIFKVLKQVHPDIGISSKAMSIMNSFINDIFEKLAGESAKLARYNKKPTITSREIQTAVRLVLPGELAKHAVSEGTKAVTKFTSS.

Basic and acidic residues-rich tracts occupy residues 1 to 28 (MAPK…EKAP) and 36 to 53 (EKRL…EGKK). Positions 1–60 (MAPKAEKKPAAKKPAEEEPAAEKAEKAPAGKKPKAEKRLPAGKGEKGSGEGKKAGRKKGK) are disordered. Residues K7 and K37 each carry the N6-acetyllysine modification. K149 participates in a covalent cross-link: Glycyl lysine isopeptide (Lys-Gly) (interchain with G-Cter in ubiquitin).

Belongs to the histone H2B family. In terms of assembly, the nucleosome is a histone octamer containing two molecules each of H2A, H2B, H3 and H4 assembled in one H3-H4 heterotetramer and two H2A-H2B heterodimers. The octamer wraps approximately 147 bp of DNA. Can be acetylated to form H2BK6ac and H2BK33ac. In terms of processing, monoubiquitinated by BRE1 to form H2BK143ub1 and deubiquitinated by UBP26. Required for heterochromatic histone H3 di- and trimethylation at H3K4me. May give a specific tag for epigenetic transcriptional activation.

It is found in the nucleus. It localises to the chromosome. Its function is as follows. Core component of nucleosome. Nucleosomes wrap and compact DNA into chromatin, limiting DNA accessibility to the cellular machineries which require DNA as a template. Histones thereby play a central role in transcription regulation, DNA repair, DNA replication and chromosomal stability. DNA accessibility is regulated via a complex set of post-translational modifications of histones, also called histone code, and nucleosome remodeling. This Oryza sativa subsp. indica (Rice) protein is Histone H2B.6 (H2B.6).